Reading from the N-terminus, the 181-residue chain is ATP-dependent protease subunit HslV (181 aa).

The active site involves threonine 7. Alanine 166, cysteine 169, and threonine 172 together coordinate Na(+).

The protein belongs to the peptidase T1B family. HslV subfamily. As to quaternary structure, a double ring-shaped homohexamer of HslV is capped on each side by a ring-shaped HslU homohexamer. The assembly of the HslU/HslV complex is dependent on binding of ATP.

It localises to the cytoplasm. The enzyme catalyses ATP-dependent cleavage of peptide bonds with broad specificity.. With respect to regulation, allosterically activated by HslU binding. Its function is as follows. Protease subunit of a proteasome-like degradation complex believed to be a general protein degrading machinery. The chain is ATP-dependent protease subunit HslV from Anaeromyxobacter sp. (strain Fw109-5).